The primary structure comprises 156 residues: Small ribosomal subunit protein uS7 (156 aa).

This sequence belongs to the universal ribosomal protein uS7 family. Part of the 30S ribosomal subunit. Contacts proteins S9 and S11.

In terms of biological role, one of the primary rRNA binding proteins, it binds directly to 16S rRNA where it nucleates assembly of the head domain of the 30S subunit. Is located at the subunit interface close to the decoding center, probably blocks exit of the E-site tRNA. This chain is Small ribosomal subunit protein uS7, found in Methylibium petroleiphilum (strain ATCC BAA-1232 / LMG 22953 / PM1).